Consider the following 528-residue polypeptide: GMP synthase [glutamine-hydrolyzing] (528 aa).

The Glutamine amidotransferase type-1 domain occupies 13–204 (AIVILDFGSQ…VYHICGCEPD (192 aa)). The active-site Nucleophile is Cys90. Residues His178 and Glu180 contribute to the active site. The 199-residue stretch at 205 to 403 (WTTEAFIDEA…LGLPEEIVSR (199 aa)) folds into the GMPS ATP-PPase domain. 232-238 (SGGVDSS) lines the ATP pocket.

As to quaternary structure, homodimer.

The enzyme catalyses XMP + L-glutamine + ATP + H2O = GMP + L-glutamate + AMP + diphosphate + 2 H(+). It participates in purine metabolism; GMP biosynthesis; GMP from XMP (L-Gln route): step 1/1. Its function is as follows. Catalyzes the synthesis of GMP from XMP. This is GMP synthase [glutamine-hydrolyzing] from Synechococcus sp. (strain CC9311).